We begin with the raw amino-acid sequence, 102 residues long: Small ribosomal subunit protein uS14 (102 aa).

This sequence belongs to the universal ribosomal protein uS14 family. Part of the 30S ribosomal subunit. Contacts proteins S3 and S10.

Its function is as follows. Binds 16S rRNA, required for the assembly of 30S particles and may also be responsible for determining the conformation of the 16S rRNA at the A site. The polypeptide is Small ribosomal subunit protein uS14 (Dichelobacter nodosus (strain VCS1703A)).